Consider the following 421-residue polypeptide: Gamma-glutamyl phosphate reductase (421 aa).

Belongs to the gamma-glutamyl phosphate reductase family.

It is found in the cytoplasm. The enzyme catalyses L-glutamate 5-semialdehyde + phosphate + NADP(+) = L-glutamyl 5-phosphate + NADPH + H(+). It participates in amino-acid biosynthesis; L-proline biosynthesis; L-glutamate 5-semialdehyde from L-glutamate: step 2/2. Catalyzes the NADPH-dependent reduction of L-glutamate 5-phosphate into L-glutamate 5-semialdehyde and phosphate. The product spontaneously undergoes cyclization to form 1-pyrroline-5-carboxylate. This chain is Gamma-glutamyl phosphate reductase, found in Ruegeria sp. (strain TM1040) (Silicibacter sp.).